We begin with the raw amino-acid sequence, 169 residues long: Gamma-crystallin 2 (169 aa).

Beta/gamma crystallin 'Greek key' domains are found at residues 1–34 (YEDR…KVDS) and 35–77 (GCWM…KVIP). A connecting peptide region spans residues 78–82 (QQKGP). Beta/gamma crystallin 'Greek key' domains are found at residues 83–123 (HKMK…NVLE) and 124–166 (GHWI…RRVL).

It belongs to the beta/gamma-crystallin family. In terms of assembly, monomer.

Its function is as follows. Crystallins are the dominant structural components of the vertebrate eye lens. This chain is Gamma-crystallin 2, found in Rana temporaria (European common frog).